The primary structure comprises 342 residues: GTPase Obg (342 aa).

The 159-residue stretch at 1–159 folds into the Obg domain; that stretch reads MKFLDLCKVY…RTIWLRLKLI (159 aa). The 168-residue stretch at 160–327 folds into the OBG-type G domain; sequence ADAGLLGLPN…VLRALWAEID (168 aa). GTP contacts are provided by residues 166-173, 191-195, 212-215, 279-282, and 308-310; these read GLPNAGKS, FTTLV, DIPG, NKID, and SGV. Residues serine 173 and threonine 193 each contribute to the Mg(2+) site.

This sequence belongs to the TRAFAC class OBG-HflX-like GTPase superfamily. OBG GTPase family. In terms of assembly, monomer. Requires Mg(2+) as cofactor.

Its subcellular location is the cytoplasm. An essential GTPase which binds GTP, GDP and possibly (p)ppGpp with moderate affinity, with high nucleotide exchange rates and a fairly low GTP hydrolysis rate. Plays a role in control of the cell cycle, stress response, ribosome biogenesis and in those bacteria that undergo differentiation, in morphogenesis control. The protein is GTPase Obg of Cereibacter sphaeroides (strain ATCC 17025 / ATH 2.4.3) (Rhodobacter sphaeroides).